Here is a 112-residue protein sequence, read N- to C-terminus: uncharacterized protein (112 aa).

The protein to U.parvum UU089.1.

This is an uncharacterized protein from Synechocystis sp. (strain ATCC 27184 / PCC 6803 / Kazusa).